We begin with the raw amino-acid sequence, 628 residues long: Nucleoside-triphosphatase 1 (628 aa).

The signal sequence occupies residues 1 to 25 (MWLPVYVPLLLVFGVSLSLPQGSLG). The Proton acceptor role is filled by Glu-236. Asn-432 is a glycosylation site (N-linked (GlcNAc...) asparagine).

The protein belongs to the GDA1/CD39 NTPase family. As to quaternary structure, homotetramer.

It is found in the secreted. The protein localises to the parasitophorous vacuole. It carries out the reaction a ribonucleoside 5'-triphosphate + H2O = a ribonucleoside 5'-diphosphate + phosphate + H(+). Functionally, may perform an important processing step in the conversion of high energy nucleotides prior to uptake by the parasite and may contribute to intracellular survival and virulence. NTPAse-I has a specific activity 4.5-fold higher than NTPAse-II in hydrolysis of ATP. The primary difference between these isozymes lies in their ability to hydrolyze nucleoside triphosphate versus diphosphate substrates. While NTPAse-II hydrolyzes ATP to ADP and ADP to AMP at almost the same rate, NTPAse-I hydrolyzes ADP to AMP at a much slower rate (0.7% of the rate for ATP). The sequence is that of Nucleoside-triphosphatase 1 (NTP3) from Toxoplasma gondii.